The sequence spans 672 residues: NADPH-Fe(3+) oxidoreductase subunit beta (672 aa).

Residues C203, C207, C211, and C215 each contribute to the [4Fe-4S] cluster site. Residue 254 to 283 (KKVAIVGAGPAGLACAYYLALEGYPCTIYE) coordinates FAD. Residue 388 to 421 (GKKVVVVGGGNTAIDCVRVALREGAEESTLLYRR) participates in NADP(+) binding. Residue 552-562 (TDLEGVFAGGD) participates in FAD binding.

In terms of assembly, heterotetramer with 2 alpha subunits. The cofactor is [4Fe-4S] cluster. Requires FAD as cofactor.

Its subcellular location is the cell membrane. Functionally, probably involved in acetate metabolism and not in the reduction of Fe(3+) chelates. May serve as a major route for NADP regeneration. In Geobacter sulfurreducens (strain DL-1 / KN400), this protein is NADPH-Fe(3+) oxidoreductase subunit beta (sfrB).